We begin with the raw amino-acid sequence, 162 residues long: Retinoic acid receptor responder protein 2 (162 aa).

An N-terminal signal peptide occupies residues 1–20 (MKCLLISLALWLGTVGTRGT). 3 disulfides stabilise this stretch: Cys-79–Cys-89, Cys-100–Cys-119, and Cys-103–Cys-134. A propeptide spanning residues 157-162 (RALRTK) is cleaved from the precursor.

Post-translationally, secreted in an inactive precursor form, prochemerin, which is proteolytically processed by a variety of extracellular proteases to generate forms with differing levels of bioactivity. For example, the removal of six amino acids results in chemerin-156, which exhibits the highest activity, while removal of seven amino acids results in chemerin-155 which has slightly less activity. Some proteases are able to cleave at more than one site and chemerin forms may be sequentially processed by different enzymes to modulate activity levels. The coordinated expression and activity of chemerin-modifying enzymes is essential for regulating its bioactivation, inactivation and, consequently, biological function. Cathepsin G cleaves seven C-terminal amino acids from prochemerin (chemerin-155), elastase is able to cleave six (chemerin-156), eight (chemerin-154) or eleven (chemerin-151), plasmin cleaves five amino acids (chemerin-157), and tryptase cleaves five (chemerin-157) or eight (chemerin-154). Multiple cleavages might be required to fully activate chemerin, with an initial tryptase cleavage resulting in chemerin with low activity (chemerin-157), and a second cleavage by carboxypeptidase N or B producing highly active chemerin (chemerin-156). Expressed in the differentiated adipocytes (at protein level). Abundantly expressed in the liver, adipose tissue including visceral, epididymal, and brown adipose tissue.

Its subcellular location is the secreted. In terms of biological role, adipocyte-secreted protein (adipokine) that regulates adipogenesis, metabolism and inflammation through activation of the chemokine-like receptor 1 (CMKLR1). Also acts as a ligand for CMKLR2. Can also bind to C-C chemokine receptor-like 2 (CCRL2), but with a lower affinity than it does to CMKLR1 or CMKLR2. Positively regulates adipocyte differentiation, modulates the expression of adipocyte genes involved in lipid and glucose metabolism and might play a role in angiogenesis, a process essential for the expansion of white adipose tissue. Also acts as a pro-inflammatory adipokine, causing an increase in secretion of pro-inflammatory and prodiabetic adipokines, which further impair adipose tissue metabolic function and have negative systemic effects including impaired insulin sensitivity, altered glucose and lipid metabolism, and a decrease in vascular function in other tissues. Can have both pro- and anti-inflammatory properties depending on the modality of enzymatic cleavage by different classes of proteases. Acts as a chemotactic factor for leukocyte populations expressing CMKLR1, particularly immature plasmacytoid dendritic cells, but also immature myeloid DCs, macrophages and natural killer cells. Exerts an anti-inflammatory role by preventing TNF/TNFA-induced VCAM1 expression and monocytes adhesion in vascular endothelial cells. The effect is mediated via inhibiting activation of NF-kappa-B and CRK/p38 through stimulation of AKT1/NOS3 signaling and nitric oxide production. Exhibits an antimicrobial function in the skin. The sequence is that of Retinoic acid receptor responder protein 2 (Rarres2) from Mus musculus (Mouse).